The chain runs to 445 residues: Maltoporin (445 aa).

The first 24 residues, 1 to 24, serve as a signal peptide directing secretion; the sequence is MITLRKLPLAVAVAAGVMSAQAMA.

It belongs to the porin LamB (TC 1.B.3) family. As to quaternary structure, homotrimer formed of three 18-stranded antiparallel beta-barrels, containing three independent channels.

It localises to the cell outer membrane. The enzyme catalyses beta-maltose(in) = beta-maltose(out). Involved in the transport of maltose and maltodextrins. The sequence is that of Maltoporin from Shigella flexneri.